Reading from the N-terminus, the 563-residue chain is Membrane protein insertase YidC (563 aa).

A helical membrane pass occupies residues 6 to 26; the sequence is TVLWMIFSFSLLLLWNNWQIH. A disordered region spans residues 36 to 70; sequence PAPEAAATQQPKADANGTAASSTASIPSSPAAAPA. Positions 54-70 are enriched in low complexity; that stretch reads AASSTASIPSSPAAAPA. 4 helical membrane passes run 373–393, 443–463, 482–502, and 512–532; these read WGWTIVALTVIIKAVFFPLAA, LPMVVQIPVFIALYWVLLASV, PFFILPAIMMATMFLQIKLNP, and VMMIMPLVFGGMMFFFPAGLV.

The protein belongs to the OXA1/ALB3/YidC family. Type 1 subfamily. As to quaternary structure, interacts with the Sec translocase complex via SecD. Specifically interacts with transmembrane segments of nascent integral membrane proteins during membrane integration.

It localises to the cell inner membrane. In terms of biological role, required for the insertion and/or proper folding and/or complex formation of integral membrane proteins into the membrane. Involved in integration of membrane proteins that insert both dependently and independently of the Sec translocase complex, as well as at least some lipoproteins. Aids folding of multispanning membrane proteins. This chain is Membrane protein insertase YidC, found in Bordetella parapertussis (strain 12822 / ATCC BAA-587 / NCTC 13253).